The following is a 144-amino-acid chain: Large ribosomal subunit protein uL16 (144 aa).

The span at 1-19 shows a compositional bias: basic residues; the sequence is MLLPKRVKYRRQHRPKTTG. The segment at 1–23 is disordered; the sequence is MLLPKRVKYRRQHRPKTTGRSKG.

This sequence belongs to the universal ribosomal protein uL16 family. In terms of assembly, part of the 50S ribosomal subunit.

Binds 23S rRNA and is also seen to make contacts with the A and possibly P site tRNAs. This is Large ribosomal subunit protein uL16 from Staphylococcus saprophyticus subsp. saprophyticus (strain ATCC 15305 / DSM 20229 / NCIMB 8711 / NCTC 7292 / S-41).